A 672-amino-acid chain; its full sequence is 2,4-dienoyl-CoA reductase [(2E)-enoyl-CoA-producing] (672 aa).

FMN is bound by residues 25–27, G59, and Q101; that span reads SMH. The active-site Proton donor is Y167. R176 provides a ligand contact to substrate. Position 215 (R215) interacts with FMN. Substrate is bound at residue 253–256; it reads HEAR. Residues R289 and 311–312 each bind FMN; that span reads AR. Residues C335 and C338 each contribute to the [4Fe-4S] cluster site. Residue Q340 coordinates FAD. Residue Q340 participates in NADP(+) binding. [4Fe-4S] cluster-binding residues include C342 and C354. Residues A385, D404, Q412, K422, and V449 each coordinate FAD. NADP(+) is bound at residue 563-564; sequence RK. Substrate contacts are provided by K567 and W578. Residues G649 and 656–658 each bind FAD; that span reads LDA. An NADP(+)-binding site is contributed by 654-656; it reads MEL.

The protein in the N-terminal section; belongs to the NADH:flavin oxidoreductase/NADH oxidase family. In terms of assembly, monomer. Requires FMN as cofactor. It depends on FAD as a cofactor. The cofactor is [4Fe-4S] cluster.

The enzyme catalyses a 4,5-saturated-(2E)-enoyl-CoA + NADP(+) = a (2E,4E)-dienoyl-CoA + NADPH + H(+). It carries out the reaction a (2E,4Z)-dienoyl-CoA + NADPH + H(+) = a 4,5-saturated-(2E)-enoyl-CoA + NADP(+). It catalyses the reaction (2E)-decenoyl-CoA + NADP(+) = (2E,4E)-decadienoyl-CoA + NADPH + H(+). The catalysed reaction is (2E)-decenoyl-CoA + NADP(+) = (2E,4Z)-decadienoyl-CoA + NADPH + H(+). It participates in lipid metabolism; fatty acid beta-oxidation. With respect to regulation, is non-competitively inhibited by NADH. In terms of biological role, functions as an auxiliary enzyme in the beta-oxidation of unsaturated fatty acids with double bonds at even carbon positions. Catalyzes the NADPH-dependent reduction of the C4-C5 double bond of the acyl chain of 2,4-dienoyl-CoA to yield 2-trans-enoyl-CoA. Acts on both isomers, 2-trans,4-cis- and 2-trans,4-trans-decadienoyl-CoA, with almost equal efficiency. Is not active with NADH instead of NADPH. Does not show cis-&gt;trans isomerase activity. The protein is 2,4-dienoyl-CoA reductase [(2E)-enoyl-CoA-producing] of Escherichia coli (strain K12).